Consider the following 794-residue polypeptide: Phenylalanine--tRNA ligase beta subunit (794 aa).

The 119-residue stretch at 40–158 (NSLNSELILG…LKKYIGSDVK (119 aa)) folds into the tRNA-binding domain. Residues 402–477 (KNKQSLEIKL…RLYSYDKIDE (76 aa)) enclose the B5 domain. Mg(2+)-binding residues include Asp-455, Asp-461, Glu-464, and Glu-465. One can recognise an FDX-ACB domain in the interval 702 to 794 (SKFQSSSRDL…NIKQMKVVIR (93 aa)).

Belongs to the phenylalanyl-tRNA synthetase beta subunit family. Type 1 subfamily. Tetramer of two alpha and two beta subunits. The cofactor is Mg(2+).

The protein resides in the cytoplasm. It carries out the reaction tRNA(Phe) + L-phenylalanine + ATP = L-phenylalanyl-tRNA(Phe) + AMP + diphosphate + H(+). This Mycoplasma mycoides subsp. mycoides SC (strain CCUG 32753 / NCTC 10114 / PG1) protein is Phenylalanine--tRNA ligase beta subunit.